A 469-amino-acid polypeptide reads, in one-letter code: Glutamate--tRNA ligase (469 aa).

The 'HIGH' region signature appears at 11 to 21; it reads PSPTGFIHLGN. Basic and acidic residues predominate over residues 114–131; it reads QREAGEKPRYDGTWRPEP. The segment at 114 to 139 is disordered; that stretch reads QREAGEKPRYDGTWRPEPGKVLPEPP. The 'KMSKS' region motif lies at 243–247; the sequence is KMSKR. Residue K246 coordinates ATP.

Belongs to the class-I aminoacyl-tRNA synthetase family. Glutamate--tRNA ligase type 1 subfamily. Monomer.

The protein localises to the cytoplasm. The enzyme catalyses tRNA(Glu) + L-glutamate + ATP = L-glutamyl-tRNA(Glu) + AMP + diphosphate. In terms of biological role, catalyzes the attachment of glutamate to tRNA(Glu) in a two-step reaction: glutamate is first activated by ATP to form Glu-AMP and then transferred to the acceptor end of tRNA(Glu). The sequence is that of Glutamate--tRNA ligase from Paraburkholderia phytofirmans (strain DSM 17436 / LMG 22146 / PsJN) (Burkholderia phytofirmans).